A 511-amino-acid polypeptide reads, in one-letter code: Tyrosine--tRNA ligase, chloroplastic/mitochondrial (511 aa).

Tyr-118 is an L-tyrosine binding site. Asp-122 is an ATP binding site. Positions 123 to 132 (PTAESLHLGN) match the 'HIGH' region motif. L-tyrosine-binding residues include Asp-162, Tyr-256, Gln-260, Asp-263, and Gln-282. A 'KMSKS' region motif is present at residues 318–322 (KFGKS). Lys-321 serves as a coordination point for ATP. The 67-residue stretch at 444–510 (LSIVDLSVSA…GKKNKVVVRI (67 aa)) folds into the S4 RNA-binding domain.

It belongs to the class-I aminoacyl-tRNA synthetase family.

Its subcellular location is the plastid. The protein localises to the chloroplast. It is found in the mitochondrion. The catalysed reaction is tRNA(Tyr) + L-tyrosine + ATP = L-tyrosyl-tRNA(Tyr) + AMP + diphosphate + H(+). In terms of biological role, catalyzes the attachment of tyrosine to tRNA(Tyr) in a two-step reaction: tyrosine is first activated by ATP to form Tyr-AMP and then transferred to the acceptor end of tRNA(Tyr). In Arabidopsis thaliana (Mouse-ear cress), this protein is Tyrosine--tRNA ligase, chloroplastic/mitochondrial.